The following is a 550-amino-acid chain: Chaperonin GroEL (550 aa).

ATP contacts are provided by residues 30 to 33 (TLGP), Lys-51, 87 to 91 (DGTTT), Gly-415, and Asp-497.

It belongs to the chaperonin (HSP60) family. In terms of assembly, forms a cylinder of 14 subunits composed of two heptameric rings stacked back-to-back. Interacts with the co-chaperonin GroES.

The protein localises to the cytoplasm. The catalysed reaction is ATP + H2O + a folded polypeptide = ADP + phosphate + an unfolded polypeptide.. In terms of biological role, together with its co-chaperonin GroES, plays an essential role in assisting protein folding. The GroEL-GroES system forms a nano-cage that allows encapsulation of the non-native substrate proteins and provides a physical environment optimized to promote and accelerate protein folding. In Yersinia enterocolitica serotype O:8 / biotype 1B (strain NCTC 13174 / 8081), this protein is Chaperonin GroEL.